Reading from the N-terminus, the 336-residue chain is Aromatic prenyltransferase (336 aa).

Belongs to the aromatic prenyltransferase family.

Its function is as follows. Prenyltransferase that attaches isoprenoid moieties to carbon atoms of aromatic substrates in an enzyme-catalyzed Friedel-Crafts reaction. Shows specificity for dimethylallyl diphosphate (DMAPP) and does not accept geranyl diphosphate (GPP) or isopentenyl diphosphate (IPP). Prenylates the artificial substrate 2,7-dihydroxynaphthalene (2,7-DHN), as well as dihydrophenazine-1-carboxylic acid at a lower level. Only traces of products are detected with aspulvinone E, flaviolin, or 4-hydroxybenzoic acid as substrates; and no product is formed with L-tryptophan, L-tyrosine, or 4-hydroxyphenylpyruvate. Ptf seems no to be involved in the prenylation reaction in the biosynthesis of aspulvinone H and J and the physiological function of ptf remains unknown. This chain is Aromatic prenyltransferase, found in Aspergillus terreus (strain NIH 2624 / FGSC A1156).